The sequence spans 337 residues: S-adenosylmethionine:tRNA ribosyltransferase-isomerase (337 aa).

It belongs to the QueA family. In terms of assembly, monomer.

The protein resides in the cytoplasm. The enzyme catalyses 7-aminomethyl-7-carbaguanosine(34) in tRNA + S-adenosyl-L-methionine = epoxyqueuosine(34) in tRNA + adenine + L-methionine + 2 H(+). It functions in the pathway tRNA modification; tRNA-queuosine biosynthesis. In terms of biological role, transfers and isomerizes the ribose moiety from AdoMet to the 7-aminomethyl group of 7-deazaguanine (preQ1-tRNA) to give epoxyqueuosine (oQ-tRNA). The polypeptide is S-adenosylmethionine:tRNA ribosyltransferase-isomerase (Legionella pneumophila subsp. pneumophila (strain Philadelphia 1 / ATCC 33152 / DSM 7513)).